The chain runs to 178 residues: Interleukin-10 (178 aa).

The first 18 residues, 1–18, serve as a signal peptide directing secretion; the sequence is MPRSALLCCLILLAGVAA. 2 disulfide bridges follow: Cys-30–Cys-126 and Cys-80–Cys-132. N-linked (GlcNAc...) asparagine glycosylation occurs at Asn-134.

This sequence belongs to the IL-10 family. Homodimer. Interacts with IL10RA and IL10RB.

It localises to the secreted. In terms of biological role, major immune regulatory cytokine that acts on many cells of the immune system where it has profound anti-inflammatory functions, limiting excessive tissue disruption caused by inflammation. Mechanistically, IL10 binds to its heterotetrameric receptor comprising IL10RA and IL10RB leading to JAK1 and STAT2-mediated phosphorylation of STAT3. In turn, STAT3 translocates to the nucleus where it drives expression of anti-inflammatory mediators. Targets antigen-presenting cells (APCs) such as macrophages and monocytes and inhibits their release of pro-inflammatory cytokines including granulocyte-macrophage colony-stimulating factor /GM-CSF, granulocyte colony-stimulating factor/G-CSF, IL-1 alpha, IL-1 beta, IL-6, IL-8 and TNF-alpha. Also interferes with antigen presentation by reducing the expression of MHC-class II and co-stimulatory molecules, thereby inhibiting their ability to induce T cell activation. In addition, controls the inflammatory response of macrophages by reprogramming essential metabolic pathways including mTOR signaling. This chain is Interleukin-10 (IL10), found in Lama glama (Llama).